The following is a 243-amino-acid chain: 1-(5-phosphoribosyl)-5-[(5-phosphoribosylamino)methylideneamino] imidazole-4-carboxamide isomerase (243 aa).

The active-site Proton acceptor is the aspartate 8. Aspartate 129 functions as the Proton donor in the catalytic mechanism.

Belongs to the HisA/HisF family.

Its subcellular location is the cytoplasm. It catalyses the reaction 1-(5-phospho-beta-D-ribosyl)-5-[(5-phospho-beta-D-ribosylamino)methylideneamino]imidazole-4-carboxamide = 5-[(5-phospho-1-deoxy-D-ribulos-1-ylimino)methylamino]-1-(5-phospho-beta-D-ribosyl)imidazole-4-carboxamide. It participates in amino-acid biosynthesis; L-histidine biosynthesis; L-histidine from 5-phospho-alpha-D-ribose 1-diphosphate: step 4/9. This Brucella suis biovar 1 (strain 1330) protein is 1-(5-phosphoribosyl)-5-[(5-phosphoribosylamino)methylideneamino] imidazole-4-carboxamide isomerase.